The following is a 272-amino-acid chain: 3-methyl-2-oxobutanoate hydroxymethyltransferase (272 aa).

Residues aspartate 53 and aspartate 92 each contribute to the Mg(2+) site. 3-methyl-2-oxobutanoate is bound by residues aspartate 53–serine 54, aspartate 92, and lysine 120. Glutamate 122 provides a ligand contact to Mg(2+). The active-site Proton acceptor is glutamate 189.

This sequence belongs to the PanB family. Homodecamer; pentamer of dimers. It depends on Mg(2+) as a cofactor.

It is found in the cytoplasm. It carries out the reaction 3-methyl-2-oxobutanoate + (6R)-5,10-methylene-5,6,7,8-tetrahydrofolate + H2O = 2-dehydropantoate + (6S)-5,6,7,8-tetrahydrofolate. Its pathway is cofactor biosynthesis; (R)-pantothenate biosynthesis; (R)-pantoate from 3-methyl-2-oxobutanoate: step 1/2. Its function is as follows. Catalyzes the reversible reaction in which hydroxymethyl group from 5,10-methylenetetrahydrofolate is transferred onto alpha-ketoisovalerate to form ketopantoate. The protein is 3-methyl-2-oxobutanoate hydroxymethyltransferase of Ralstonia pickettii (strain 12J).